We begin with the raw amino-acid sequence, 195 residues long: Shikimate kinase (195 aa).

33 to 38 (GAGKTT) lines the ATP pocket. Threonine 37 lines the Mg(2+) pocket. Residues aspartate 55, arginine 79, and glycine 101 each coordinate substrate. Residue arginine 139 participates in ATP binding. Arginine 158 lines the substrate pocket. Residue arginine 175 participates in ATP binding.

The protein belongs to the shikimate kinase family. As to quaternary structure, monomer. It depends on Mg(2+) as a cofactor.

The protein resides in the cytoplasm. The enzyme catalyses shikimate + ATP = 3-phosphoshikimate + ADP + H(+). The protein operates within metabolic intermediate biosynthesis; chorismate biosynthesis; chorismate from D-erythrose 4-phosphate and phosphoenolpyruvate: step 5/7. Its function is as follows. Catalyzes the specific phosphorylation of the 3-hydroxyl group of shikimic acid using ATP as a cosubstrate. The sequence is that of Shikimate kinase from Nitrosospira multiformis (strain ATCC 25196 / NCIMB 11849 / C 71).